Here is a 344-residue protein sequence, read N- to C-terminus: MASESAGPAELGFVEAAPSWRLRSEQFPSKVGGRPAWLSAAGLPGPPELACPLCGRPMAFLLQVYAPLPGRADAFHRCLFLFCCRTPPCCCGLRVFRNQLPRQNDFYSYEPPSEDPPSETGESVYLHLKSGAHLCRVCGCSGPKRCSRCHKAHYCSKEHQSLDWRLGHKQACAQTDNLDNIVPDHNFLFPEFEIVIETEDEIMPEVVERDDESEIIGTMGEAHEEELESMAKHESKEDRIFRKFKTKISLEPEQILRYGRGIAPLWISGENTPKEKDIPDCPCGAKRLFEFQVMPQLLNYLKADRLGRSVDWGVLAIFTCAESCKLGIGYTEEFVWKQDITDAA.

Zn(2+) contacts are provided by cysteine 135, cysteine 138, cysteine 146, cysteine 149, cysteine 155, histidine 159, histidine 168, and cysteine 172. The segment at 135 to 172 (CRVCGCSGPKRCSRCHKAHYCSKEHQSLDWRLGHKQAC) adopts an MYND-type; atypical zinc-finger fold.

In terms of processing, ubiquitinated by PRKN, promoting proteasomal degradation.

It localises to the nucleus. May be a DNA-binding protein with a regulatory function. May play an important role in cell death and/or in regulation of cell proliferation. This chain is Programmed cell death protein 2 (PDCD2), found in Bos taurus (Bovine).